We begin with the raw amino-acid sequence, 258 residues long: Granzyme K (258 aa).

An N-terminal signal peptide occupies residues Met1–His23. A propeptide spans Thr24–Glu25 (activation peptide). The Peptidase S1 domain occupies Ile26 to Ala253. Cys51 and Cys67 are oxidised to a cystine. Catalysis depends on charge relay system residues His66 and Asp110. 3 disulfides stabilise this stretch: Cys143–Cys214, Cys175–Cys193, and Cys204–Cys228. The active-site Charge relay system is Ser208.

Belongs to the peptidase S1 family. Granzyme subfamily. As to expression, speen, lungs and liver non-parenchymal cells.

It is found in the cytoplasmic granule. This chain is Granzyme K (Gzmk), found in Rattus norvegicus (Rat).